The primary structure comprises 61 residues: Small ribosomal subunit protein uS14 (61 aa).

4 residues coordinate Zn(2+): cysteine 24, cysteine 27, cysteine 40, and cysteine 43.

Belongs to the universal ribosomal protein uS14 family. Zinc-binding uS14 subfamily. Part of the 30S ribosomal subunit. Contacts proteins S3 and S10. It depends on Zn(2+) as a cofactor.

Its function is as follows. Binds 16S rRNA, required for the assembly of 30S particles and may also be responsible for determining the conformation of the 16S rRNA at the A site. This is Small ribosomal subunit protein uS14 from Leptospira biflexa serovar Patoc (strain Patoc 1 / Ames).